A 466-amino-acid chain; its full sequence is 55 kDa erythrocyte membrane protein (466 aa).

Residue Thr-2 is modified to N-acetylthreonine. A phosphoserine mark is found at Ser-13 and Ser-19. Phosphothreonine is present on Thr-49. A phosphoserine mark is found at Ser-52, Ser-57, and Ser-110. The region spanning 71 to 152 (LIQIEKVTEE…MISLKVIPNQ (82 aa)) is the PDZ domain. The 71-residue stretch at 158 to 228 (ALQMFMRAQF…PSPELQEWRV (71 aa)) folds into the SH3 domain. The residue at position 243 (Ser-243) is a Phosphoserine. The tract at residues 268–466 (VVSYEEVVRL…PQWVPVSWVY (199 aa)) is interaction with PALS1. The Guanylate kinase-like domain occupies 282 to 451 (RKTLVLIGAS…TLKKLQEAFD (170 aa)).

This sequence belongs to the MAGUK family. Heterodimer with PALS1. Interacts with DLG5 and NF2. Interacts (via guanylate kinase-like domain) with WHRN (via third PDZ domain). In terms of processing, palmitoylated.

The protein resides in the cell membrane. Its subcellular location is the cell projection. It is found in the stereocilium. In terms of biological role, essential regulator of neutrophil polarity. Regulates neutrophil polarization by regulating AKT1 phosphorylation through a mechanism that is independent of PIK3CG activity. This is 55 kDa erythrocyte membrane protein (MPP1) from Papio anubis (Olive baboon).